The chain runs to 142 residues: Ribosome maturation factor RimP (142 aa).

It belongs to the RimP family.

The protein localises to the cytoplasm. In terms of biological role, required for maturation of 30S ribosomal subunits. This is Ribosome maturation factor RimP from Nitratiruptor sp. (strain SB155-2).